The sequence spans 551 residues: MSAQEFYQGGNQRGYQQQQFPPPPGGPPQDQNGGKQEYVPPQGQPPNYNMKPSQPYASTNPETGGQPVYQDTAPFSQANEKTGERMNPRKRVNDIIPLILFIAAVVGFAVVSGIAIHGFVQVNGLGGGMGDSSIGRTGSSITLDYHTVYLLLVVVALGLVIASLYLAALRAFTKIILEVTLALTVILNIGICIYYFIIQYWSGAIIFLIIALVSVFFYWGMRKRIPLAKLLLQTTIDVTKHHPSVYVVVFIGLIIQAAVSVWYTFTCIAIYVKWTPGSAACSDGGCSSSKVAGLVFYATFSYLWLSQVIGNVILCTLAGGVFGGWYYYGPRTPGGGVPKRASLLAFVRASTLSLGSIAFGSLLVTILELLRLILQLFRQYEAGQGDMIGSILICIAQCCIGCIQWMVEYFNKYAYIEIALYGKSYIPAAKDTWRLLKDRGIDALVNDSLVGTALMWGAYINGFLCAVLGYFYLRFTHPAYNSDGQYSAPVILFSFLIGLNESFTVGSAIDAGVSTIFVGLGEDPMVLAERSPGLFEMIRQVYPRVVQGVPH.

The tract at residues 1–72 is disordered; it reads MSAQEFYQGG…TGGQPVYQDT (72 aa). The Cytoplasmic segment spans residues 1 to 94; it reads MSAQEFYQGG…RMNPRKRVND (94 aa). Positions 8–19 are enriched in low complexity; that stretch reads QGGNQRGYQQQQ. The span at 45–63 shows a compositional bias: polar residues; that stretch reads PPNYNMKPSQPYASTNPET. A helical membrane pass occupies residues 95 to 115; the sequence is IIPLILFIAAVVGFAVVSGIA. Topologically, residues 116 to 147 are extracellular; the sequence is IHGFVQVNGLGGGMGDSSIGRTGSSITLDYHT. The chain crosses the membrane as a helical span at residues 148 to 168; sequence VYLLLVVVALGLVIASLYLAA. Topologically, residues 169–177 are cytoplasmic; that stretch reads LRAFTKIIL. The chain crosses the membrane as a helical span at residues 178 to 198; it reads EVTLALTVILNIGICIYYFII. The Extracellular portion of the chain corresponds to 199–200; the sequence is QY. A helical membrane pass occupies residues 201 to 221; it reads WSGAIIFLIIALVSVFFYWGM. The Cytoplasmic segment spans residues 222–244; it reads RKRIPLAKLLLQTTIDVTKHHPS. The chain crosses the membrane as a helical span at residues 245-265; sequence VYVVVFIGLIIQAAVSVWYTF. Over 266 to 307 the chain is Extracellular; the sequence is TCIAIYVKWTPGSAACSDGGCSSSKVAGLVFYATFSYLWLSQ. The chain crosses the membrane as a helical span at residues 308-328; that stretch reads VIGNVILCTLAGGVFGGWYYY. Topologically, residues 329–356 are cytoplasmic; sequence GPRTPGGGVPKRASLLAFVRASTLSLGS. Residues 357–377 traverse the membrane as a helical segment; the sequence is IAFGSLLVTILELLRLILQLF. At 378–386 the chain is on the extracellular side; that stretch reads RQYEAGQGD. Residues 387-407 form a helical membrane-spanning segment; that stretch reads MIGSILICIAQCCIGCIQWMV. Residues 408–452 lie on the Cytoplasmic side of the membrane; it reads EYFNKYAYIEIALYGKSYIPAAKDTWRLLKDRGIDALVNDSLVGT. Residues 453-473 traverse the membrane as a helical segment; the sequence is ALMWGAYINGFLCAVLGYFYL. Residues 474–488 lie on the Extracellular side of the membrane; sequence RFTHPAYNSDGQYSA. Residues 489 to 509 traverse the membrane as a helical segment; that stretch reads PVILFSFLIGLNESFTVGSAI. The Cytoplasmic portion of the chain corresponds to 510 to 551; the sequence is DAGVSTIFVGLGEDPMVLAERSPGLFEMIRQVYPRVVQGVPH.

The protein belongs to the CTL (choline transporter-like) family.

It localises to the cell membrane. In terms of biological role, probably involved in transport through the plasma membrane. In Cryptococcus neoformans var. neoformans serotype D (strain B-3501A) (Filobasidiella neoformans), this protein is Protein PNS1 (PNS1).